The chain runs to 239 residues: RNA chaperone ProQ (239 aa).

The segment at 107-177 (KARVQAQRAE…RKPVAKPVQA (71 aa)) is disordered. Positions 115–137 (AEQRAKKREAENVAAGEKNERPT) are enriched in basic and acidic residues.

The protein belongs to the ProQ family.

Its subcellular location is the cytoplasm. In terms of biological role, RNA chaperone with significant RNA binding, RNA strand exchange and RNA duplexing activities. May regulate ProP activity through an RNA-based, post-transcriptional mechanism. This chain is RNA chaperone ProQ, found in Photorhabdus laumondii subsp. laumondii (strain DSM 15139 / CIP 105565 / TT01) (Photorhabdus luminescens subsp. laumondii).